The chain runs to 344 residues: tRNA N6-adenosine threonylcarbamoyltransferase (344 aa).

Positions 115 and 119 each coordinate Fe cation. Substrate-binding positions include 137 to 141 (LVSGG), aspartate 170, glycine 183, aspartate 187, and asparagine 276. Aspartate 306 is a binding site for Fe cation.

This sequence belongs to the KAE1 / TsaD family. Fe(2+) is required as a cofactor.

It is found in the cytoplasm. It catalyses the reaction L-threonylcarbamoyladenylate + adenosine(37) in tRNA = N(6)-L-threonylcarbamoyladenosine(37) in tRNA + AMP + H(+). In terms of biological role, required for the formation of a threonylcarbamoyl group on adenosine at position 37 (t(6)A37) in tRNAs that read codons beginning with adenine. Is involved in the transfer of the threonylcarbamoyl moiety of threonylcarbamoyl-AMP (TC-AMP) to the N6 group of A37, together with TsaE and TsaB. TsaD likely plays a direct catalytic role in this reaction. This is tRNA N6-adenosine threonylcarbamoyltransferase from Limosilactobacillus fermentum (strain NBRC 3956 / LMG 18251) (Lactobacillus fermentum).